A 550-amino-acid polypeptide reads, in one-letter code: Leiomodin-2 (550 aa).

Residues 1–47 (MSTFGYRRGLSKYESIDEDELLASLSPEELKELERELEDIEPDRNLP) are interaction with tropomyosin alpha. Interaction with actin regions lie at residues 1–165 (MSTF…TDNS), 166–500 (KPKT…KEIK), and 524–543 (VHEN…LRRV). 3 positions are modified to phosphoserine: Ser11, Ser15, and Ser24. A compositionally biased stretch (basic and acidic residues) spans 84 to 94 (ERLGECGKVAE). Disordered stretches follow at residues 84 to 202 (ERLG…PCGN) and 359 to 527 (MDKQ…VHEN). Positions 91 to 147 (KVAEEDKEESEEELIFTESNSEVSEEVCTEDEEESQEEEEDSEEEEDSEEEEETTEA) form a coiled coil. 2 stretches are compositionally biased toward acidic residues: residues 95 to 105 (EDKEESEEELI) and 113 to 145 (VSEE…EETT). 2 stretches are compositionally biased toward polar residues: residues 151–164 (INGT…NTDN) and 170–193 (FKSQ…NSES). Positions 359–377 (MDKQRQKRMQEQKQQEGHD) are enriched in basic and acidic residues. Positions 391-402 (TPGSSPYASPRQ) are enriched in polar residues. At Ser407 the chain carries Phosphoserine. A compositionally biased stretch (pro residues) spans 421–452 (PPSPVAPPPPPPPPPLPPHMLPPPPPPPAPPL). Residues 468 to 479 (QQESAQRALQNG) show a composition bias toward polar residues. Basic residues predominate over residues 480-490 (QRKKKGKKVKK). Positions 497-515 (KEIKNSLRSVQEKKMEDSS) are enriched in basic and acidic residues. The WH2 domain occupies 524 to 543 (VHENLMEAIRGSSIRQLRRV).

It belongs to the tropomodulin family. As to quaternary structure, can bind at least three actin monomers and thereby provides a nucleus for actin filament formation. Interacts (via N-terminus) with tropomyosin alpha (TPM1) (via N-terminus). May also interact with TPM2 (via N-terminus). Interacts with FLII. In terms of tissue distribution, detected in neonate heart (at protein level). Detected in embryonic heart and in pharyngeal arches. Detected in adult heart.

It localises to the cytoplasm. The protein localises to the myofibril. The protein resides in the sarcomere. It is found in the m line. Its subcellular location is the cytoskeleton. Functionally, mediates nucleation of actin filaments and thereby promotes actin polymerization. Plays a role in the regulation of actin filament length. Required for normal sarcomere organization in the heart, and for normal heart function. The chain is Leiomodin-2 (Lmod2) from Mus musculus (Mouse).